The following is a 109-amino-acid chain: 12 kDa heat shock protein (109 aa).

Positions 1 to 21 (MSDAGRKGFGEKASEALKPDS) are enriched in basic and acidic residues. A disordered region spans residues 1-82 (MSDAGRKGFG…SLADQARDYM (82 aa)). Ser-21 is modified (phosphoserine; by ATM or ATR). At Ser-24 the chain carries Phosphoserine. Basic and acidic residues-rich tracts occupy residues 28-50 (QGKEYITDKADKVAGKVQPEDNK) and 58-67 (DSAEKGKDNA). Phosphoserine occurs at positions 59, 73, and 97.

It to S.pombe hsp9 and C.albicans WH11.

Its function is as follows. May play a role in a switch from carbohydrate utilizing metabolism to fatty acid utilizing metabolism. The polypeptide is 12 kDa heat shock protein (HSP12) (Saccharomyces cerevisiae (strain ATCC 204508 / S288c) (Baker's yeast)).